Here is a 200-residue protein sequence, read N- to C-terminus: NADH-quinone oxidoreductase subunit C (200 aa).

Belongs to the complex I 30 kDa subunit family. As to quaternary structure, NDH-1 is composed of 14 different subunits. Subunits NuoB, C, D, E, F, and G constitute the peripheral sector of the complex.

The protein resides in the cell inner membrane. The enzyme catalyses a quinone + NADH + 5 H(+)(in) = a quinol + NAD(+) + 4 H(+)(out). Functionally, NDH-1 shuttles electrons from NADH, via FMN and iron-sulfur (Fe-S) centers, to quinones in the respiratory chain. The immediate electron acceptor for the enzyme in this species is believed to be ubiquinone. Couples the redox reaction to proton translocation (for every two electrons transferred, four hydrogen ions are translocated across the cytoplasmic membrane), and thus conserves the redox energy in a proton gradient. This Ralstonia nicotianae (strain ATCC BAA-1114 / GMI1000) (Ralstonia solanacearum) protein is NADH-quinone oxidoreductase subunit C.